Here is a 79-residue protein sequence, read N- to C-terminus: MNKTIEYQKEFLKENNQLLSIPVKKNILKEILQNDEQDTIITNCITKEVSINLDLIKNPKVLYSIYIMVVEYLKSMNIA.

Belongs to the asfivirus D79L family.

This is an uncharacterized protein from African swine fever virus (isolate Tick/South Africa/Pretoriuskop Pr4/1996) (ASFV).